Reading from the N-terminus, the 455-residue chain is Ribosomal protein uS12 methylthiotransferase RimO (455 aa).

One can recognise an MTTase N-terminal domain in the interval 10 to 126 (RKVSMISLGC…ILELIEAHDR (117 aa)). Positions 19, 55, 89, 164, 168, and 171 each coordinate [4Fe-4S] cluster. A Radical SAM core domain is found at 150–380 (SSPFYSTYVK…MKAQQRVSFR (231 aa)). In terms of domain architecture, TRAM spans 383–451 (RALIGRVEPV…EYDLIGEIVD (69 aa)).

The protein belongs to the methylthiotransferase family. RimO subfamily. [4Fe-4S] cluster serves as cofactor.

The protein localises to the cytoplasm. It carries out the reaction L-aspartate(89)-[ribosomal protein uS12]-hydrogen + (sulfur carrier)-SH + AH2 + 2 S-adenosyl-L-methionine = 3-methylsulfanyl-L-aspartate(89)-[ribosomal protein uS12]-hydrogen + (sulfur carrier)-H + 5'-deoxyadenosine + L-methionine + A + S-adenosyl-L-homocysteine + 2 H(+). In terms of biological role, catalyzes the methylthiolation of an aspartic acid residue of ribosomal protein uS12. This is Ribosomal protein uS12 methylthiotransferase RimO from Syntrophotalea carbinolica (strain DSM 2380 / NBRC 103641 / GraBd1) (Pelobacter carbinolicus).